A 294-amino-acid chain; its full sequence is N-acetylmuramic acid 6-phosphate etherase (294 aa).

One can recognise an SIS domain in the interval 56–219; it reads TSQALKKGGR…STLSMVSVGK (164 aa). Glu84 acts as the Proton donor in catalysis. Glu115 is a catalytic residue.

Belongs to the GCKR-like family. MurNAc-6-P etherase subfamily. Homodimer.

It carries out the reaction N-acetyl-D-muramate 6-phosphate + H2O = N-acetyl-D-glucosamine 6-phosphate + (R)-lactate. It participates in amino-sugar metabolism; 1,6-anhydro-N-acetylmuramate degradation. The protein operates within amino-sugar metabolism; N-acetylmuramate degradation. It functions in the pathway cell wall biogenesis; peptidoglycan recycling. In terms of biological role, specifically catalyzes the cleavage of the D-lactyl ether substituent of MurNAc 6-phosphate, producing GlcNAc 6-phosphate and D-lactate. Together with AnmK, is also required for the utilization of anhydro-N-acetylmuramic acid (anhMurNAc) either imported from the medium or derived from its own cell wall murein, and thus plays a role in cell wall recycling. The polypeptide is N-acetylmuramic acid 6-phosphate etherase (Francisella philomiragia subsp. philomiragia (strain ATCC 25017 / CCUG 19701 / FSC 153 / O#319-036)).